The primary structure comprises 164 residues: R-phycoerythrin alpha chain (164 aa).

Positions 47, 81, 82, 84, 88, 137, 139, and 142 each coordinate (2R,3E)-phycoerythrobilin.

This sequence belongs to the phycobiliprotein family. In terms of assembly, heterododecamer of 6 alpha and 6 beta chains. The basic functional unit of phycobiliproteins is a ring-shaped hexamer formed from two back-to-back trimers contacting via the alpha chain subunits. The trimers are composed of alpha/beta subunit heterodimers arranged around a three-fold axis of symmetry. The phycoerythrins also contain a gamma subunit which is located in the center of the hexamer. Post-translationally, contains two covalently linked phycoerythrobilin chromophores.

Its subcellular location is the plastid. The protein resides in the chloroplast thylakoid membrane. Functionally, light-harvesting photosynthetic tetrapyrrole chromophore-protein from the phycobiliprotein complex. In Agarophyton chilense (Red seaweed), this protein is R-phycoerythrin alpha chain (rpeA).